The sequence spans 209 residues: COP9 signalosome complex subunit 8 (209 aa).

A PCI domain is found at 8-179 (ESAFSFKKLL…GALDVSFNKF (172 aa)). The residue at position 175 (serine 175) is a Phosphoserine.

It belongs to the CSN8 family. In terms of assembly, component of the CSN complex, composed of COPS1/GPS1, COPS2, COPS3, COPS4, COPS5, COPS6, COPS7 (COPS7A or COPS7B), COPS8 and COPS9 isoform 1. In the complex, it probably interacts directly with COPS3, COPS4 and COPS7 (COPS7A or COPS7B).

Its subcellular location is the cytoplasm. It is found in the nucleus. In terms of biological role, component of the COP9 signalosome complex (CSN), a complex involved in various cellular and developmental processes. The CSN complex is an essential regulator of the ubiquitin (Ubl) conjugation pathway by mediating the deneddylation of the cullin subunits of SCF-type E3 ligase complexes, leading to decrease the Ubl ligase activity of SCF-type complexes such as SCF, CSA or DDB2. The complex is also involved in phosphorylation of p53/TP53, c-jun/JUN, IkappaBalpha/NFKBIA, ITPK1 and IRF8/ICSBP, possibly via its association with CK2 and PKD kinases. CSN-dependent phosphorylation of TP53 and JUN promotes and protects degradation by the Ubl system, respectively. In Homo sapiens (Human), this protein is COP9 signalosome complex subunit 8 (COPS8).